The chain runs to 861 residues: Homeobox-leucine zipper protein HOX29 (861 aa).

Residues 2–65 (DASKYVRYTP…NRRCREKQRK (64 aa)) constitute a DNA-binding region (homeobox). A coiled-coil region spans residues 57–99 (RRCREKQRKESSRLQALNRKLTAMNKLLMEENDRLQKQVSQLV). Residues 162–390 (RDASPAGLMS…VAHEDTRSVI (229 aa)) form the START domain.

Belongs to the HD-ZIP homeobox family. Class III subfamily. As to expression, expressed in roots, stems and leaf blades.

Its subcellular location is the nucleus. Functionally, probable transcription factor. The sequence is that of Homeobox-leucine zipper protein HOX29 (HOX29) from Oryza sativa subsp. indica (Rice).